The following is a 430-amino-acid chain: Histidine--tRNA ligase (430 aa).

Belongs to the class-II aminoacyl-tRNA synthetase family. Homodimer.

The protein resides in the cytoplasm. The catalysed reaction is tRNA(His) + L-histidine + ATP = L-histidyl-tRNA(His) + AMP + diphosphate + H(+). This chain is Histidine--tRNA ligase, found in Lactococcus lactis subsp. lactis (strain IL1403) (Streptococcus lactis).